We begin with the raw amino-acid sequence, 473 residues long: Photosystem II CP43 reaction center protein (473 aa).

The propeptide occupies 1–14 (MKTLYSPRRFYPVE). T15 is subject to N-acetylthreonine. Position 15 is a phosphothreonine (T15). 5 helical membrane-spanning segments follow: residues 69–93 (LFEV…PHLA), 134–155 (LIGP…KDRN), 178–200 (KALF…RKIT), 255–275 (KPFA…LSYS), and 291–312 (WFNN…ASQA). E367 contributes to the [CaMn4O5] cluster binding site. A helical membrane pass occupies residues 447 to 471 (RARAAAAGFEKGIDRDLEPVLFMTP).

This sequence belongs to the PsbB/PsbC family. PsbC subfamily. PSII is composed of 1 copy each of membrane proteins PsbA, PsbB, PsbC, PsbD, PsbE, PsbF, PsbH, PsbI, PsbJ, PsbK, PsbL, PsbM, PsbT, PsbX, PsbY, PsbZ, Psb30/Ycf12, at least 3 peripheral proteins of the oxygen-evolving complex and a large number of cofactors. It forms dimeric complexes. Requires Binds multiple chlorophylls and provides some of the ligands for the Ca-4Mn-5O cluster of the oxygen-evolving complex. It may also provide a ligand for a Cl- that is required for oxygen evolution. PSII binds additional chlorophylls, carotenoids and specific lipids. as cofactor.

It localises to the plastid. The protein localises to the chloroplast thylakoid membrane. Functionally, one of the components of the core complex of photosystem II (PSII). It binds chlorophyll and helps catalyze the primary light-induced photochemical processes of PSII. PSII is a light-driven water:plastoquinone oxidoreductase, using light energy to abstract electrons from H(2)O, generating O(2) and a proton gradient subsequently used for ATP formation. This chain is Photosystem II CP43 reaction center protein, found in Welwitschia mirabilis (Tree tumbo).